The following is a 72-amino-acid chain: Large ribosomal subunit protein bL28 (72 aa).

The protein belongs to the bacterial ribosomal protein bL28 family.

The protein is Large ribosomal subunit protein bL28 of Chlorobium phaeovibrioides (strain DSM 265 / 1930) (Prosthecochloris vibrioformis (strain DSM 265)).